The primary structure comprises 777 residues: Biotin sulfoxide reductase (777 aa).

Position 148 (Ser148) interacts with Mo-bis(molybdopterin guanine dinucleotide).

Belongs to the prokaryotic molybdopterin-containing oxidoreductase family. Mo-bis(molybdopterin guanine dinucleotide) is required as a cofactor.

The catalysed reaction is [thioredoxin]-disulfide + L-methionine + H2O = L-methionine (S)-S-oxide + [thioredoxin]-dithiol. Functionally, this enzyme may serve as a scavenger, allowing the cell to utilize biotin sulfoxide as a biotin source. It reduces a spontaneous oxidation product of biotin, D-biotin D-sulfoxide (BSO or BDS), back to biotin. Also exhibits methionine-(S)-sulfoxide (Met-S-SO) reductase activity, acting specifically on the (S) enantiomer in the free, but not the protein-bound form. It thus plays a role in assimilation of oxidized methionines. The polypeptide is Biotin sulfoxide reductase (bisC) (Escherichia coli (strain K12)).